A 520-amino-acid polypeptide reads, in one-letter code: MKIEIAIVLILAAAGLGYFVGNMLRKRISDTLVSKAEELASKIVDDAKREAETITKEAELKAKDEVFQAKAEAERDAKEKRKDLQALEKRLQQKEENLDKKMNLFDQRDADLTKKDQALLNREQGLVQKEERLDGLIAEQREKLESISGLSSTEAKKILMDAMESEAKLDAAKRIKVIEEEARETADKKSKEIMALAIQRYAGEYVAERSVSVVALPSDEMKGRIIGREGRNIRALEAATGIDLIIDDTPEAVILSGFNPVRREVAKIALEKLITDGRIHPGRIEEVVAKAEEEVEQTIKEAGDQAAFDLGVHGIHPEILKLIGRLKYRTSYSQNVYQHSLEVAFLCGIMASELGINVKQAKRAGLLHDLGKAVDHEVEGSHAVIGAELARKYGESPKIVHAIMAHHEDEKPNTVLAVLVQAADALSGARPGARREMMETYVKRLDDLERIATSFVGVNNSFAIQAGREIRVMVSSDEVTDERAVVLAKDIAKKIEAEMTYPGQIKVNVIRETRAIEYAR.

A helical membrane pass occupies residues 3–23 (IEIAIVLILAAAGLGYFVGNM). One can recognise a KH domain in the interval 210–273 (SVSVVALPSD…EVAKIALEKL (64 aa)). Residues 336–429 (VYQHSLEVAF…VQAADALSGA (94 aa)) form the HD domain.

This sequence belongs to the RNase Y family.

It is found in the cell membrane. Functionally, endoribonuclease that initiates mRNA decay. The sequence is that of Ribonuclease Y from Geobacter metallireducens (strain ATCC 53774 / DSM 7210 / GS-15).